Consider the following 193-residue polypeptide: Proton-translocating ferredoxin:NAD(+) oxidoreductase complex subunit A (193 aa).

Helical transmembrane passes span 11–31, 39–59, 62–82, 102–122, 134–154, and 171–191; these read AVVVNNYVLTRFLGLCIFFGV, VGMGMAVTSVITMSSILAWVV, FVLIPFNLTFLKTVVFVLLIA, MWGIYLLLIATNCIVLAVPIL, VVNAIGSGLGFAMAIILMASL, and GVAFILAGMLALAFLGFSGMI.

This sequence belongs to the NqrDE/RnfAE family. In terms of assembly, the complex is composed of six subunits: RnfA, RnfB, RnfC, RnfD, RnfE and RnfG.

It localises to the cell membrane. Its function is as follows. Part of a membrane-bound complex that couples electron transfer with translocation of ions across the membrane. Couples electron transfer from reduced ferredoxin to NAD(+) with translocation of H(+) out of the cell. Essential for energy conservation during autotrophic growth. Contributes to ATP synthesis during heterotrophic growth. The protein is Proton-translocating ferredoxin:NAD(+) oxidoreductase complex subunit A of Clostridium ljungdahlii (strain ATCC 55383 / DSM 13528 / PETC).